The sequence spans 181 residues: Ribose 1,5-bisphosphate phosphokinase PhnN (181 aa).

12-19 serves as a coordination point for ATP; it reads GPSGAGKD.

The protein belongs to the ribose 1,5-bisphosphokinase family.

The catalysed reaction is alpha-D-ribose 1,5-bisphosphate + ATP = 5-phospho-alpha-D-ribose 1-diphosphate + ADP. The protein operates within metabolic intermediate biosynthesis; 5-phospho-alpha-D-ribose 1-diphosphate biosynthesis; 5-phospho-alpha-D-ribose 1-diphosphate from D-ribose 5-phosphate (route II): step 3/3. Functionally, catalyzes the phosphorylation of ribose 1,5-bisphosphate to 5-phospho-D-ribosyl alpha-1-diphosphate (PRPP). In Acidiphilium cryptum (strain JF-5), this protein is Ribose 1,5-bisphosphate phosphokinase PhnN.